We begin with the raw amino-acid sequence, 681 residues long: PAB-dependent poly(A)-specific ribonuclease subunit pan3-like (681 aa).

A C3H1-type zinc finger spans residues 9–38 (FSTNIPCRNEQLYGRCPYIDKGCFFQHKNQ). 2 disordered regions span residues 38–58 (QDNA…PQNS) and 82–123 (SSAS…TVSL). The segment covering 41–50 (APASSKPPSA) has biased composition (low complexity). Over residues 96 to 106 (KSYSSALSSGK) the composition is skewed to polar residues. Residue Ser-165 is modified to Phosphoserine.

It belongs to the protein kinase superfamily. PAN3 family.

The protein resides in the cytoplasm. Regulatory subunit of the poly(A)-nuclease (PAN) deadenylation complex. The sequence is that of PAB-dependent poly(A)-specific ribonuclease subunit pan3-like from Schizosaccharomyces pombe (strain 972 / ATCC 24843) (Fission yeast).